The primary structure comprises 556 residues: Formate--tetrahydrofolate ligase (556 aa).

65–72 (TPAGEGKS) contributes to the ATP binding site.

Belongs to the formate--tetrahydrofolate ligase family.

It catalyses the reaction (6S)-5,6,7,8-tetrahydrofolate + formate + ATP = (6R)-10-formyltetrahydrofolate + ADP + phosphate. It functions in the pathway one-carbon metabolism; tetrahydrofolate interconversion. This is Formate--tetrahydrofolate ligase from Streptococcus agalactiae serotype Ia (strain ATCC 27591 / A909 / CDC SS700).